The chain runs to 1161 residues: MKKFSRMPKSEGGSGGGAAGGGAGGAGAGAGCGSGGSSVGVRVFAVGRHQVTLEESLAEGGFSTVFLVRTHGGIRCALKRMYVNNMPDLNVCKREITIMKELSGHKNIVGYLDCAVNSISDNVWEVLILMEYCRAGQVVNQMNKKLQTGFTEPEVLQIFCDTCEAVARLHQCKTPIIHRDLKVENILLNDGGNYVLCDFGSATNKFLNPQKDGVNVVEEEIKKYTTLSYRAPEMINLYGGKPITTKADIWALGCLLYKLCFFTLPFGESQVAICDGNFTIPDNSRYSRNIHCLIRFMLEPDPEHRPDIFQVSYFAFKFAKKDCPVSNINNSSIPSALPEPMTASEAAARKSQIKARITDTIGPTETSIAPRQRPKANSATTATPSVLTIQSSATPVKVLAPGEFGNHRPKGALRPGNGPEILLGQGPPQQPPQQHRVLQQLQQGDWRLQQLHLQHRHPHQQQQQQQQQQQQQQQQQQQQQQQQQQQHHHHHHHHLLQDAYMQQYQHATQQQQMLQQQFLMHSVYQPQPSASQYPTMMPQYQQAFFQQQMLAQHQPSQQQASPEYLTSPQEFSPALVSYTSSLPAQVGTIMDSSYSANRSVADKEAIANFTNQKNISNPPDMSGWNPFGEDNFSKLTEEELLDREFDLLRSNRLEERASSDKNVDSLSAPHNHPPEDPFGSVPFISHSGSPEKKAEHSSINQENGTANPIKNGKTSPASKDQRTGKKTSVQGQVQKGNDESESDFESDPPSPKSSEEEEQDDEEVLQGEQGDFNDDDTEPENLGHRPLLMDSEDEEEEEKHSSDSDYEQAKAKYSDMSSVYRDRSGSGPTQDLNTILLTSAQLSSDVAVETPKQEFDVFGAVPFFAVRAQQPQQEKNEKNLPQHRFPAAGLEQEEFDVFTKAPFSKKVNVQECHAVGPEAHTIPGYPKSVDVFGSTPFQPFLTSTSKSESNEDLFGLVPFDEITGSQQQKVKQRSLQKLSSRQRRTKQDMSKSNGKRHHGTPTSTKKTLKPTYRTPERARRHKKVGRRDSQSSNEFLTISDSKENISVALTDGKDRGNVLQPEESLLDPFGAKPFHSPDLSWHPPHQGLSDIRADHNTVLPGRPRQNSLHGSFHSADVLKMDDFGAVPFTELVVQSITPHQSQQSQPVELDPFGAAPFPSKQ.

The interval 1–20 is disordered; that stretch reads MKKFSRMPKSEGGSGGGAAG. The residue at position 14 (S14) is a Phosphoserine. The Protein kinase domain occupies 51–316; sequence VTLEESLAEG…DIFQVSYFAF (266 aa). ATP is bound by residues 57 to 65 and K79; that span reads LAEGGFSTV. D180 (proton acceptor) is an active-site residue. Disordered regions lie at residues 358 to 439, 453 to 495, 610 to 630, and 655 to 832; these read TDTI…RVLQ, LQHR…HHHL, TNQK…FGED, and ERAS…TQDL. The span at 361 to 394 shows a compositional bias: polar residues; that stretch reads IGPTETSIAPRQRPKANSATTATPSVLTIQSSAT. Low complexity-rich tracts occupy residues 422-439 and 460-485; these read LLGQ…RVLQ and QQQQ…QQQQ. Polar residues predominate over residues 610–619; the sequence is TNQKNISNPP. A Phosphoserine modification is found at S689. Composition is skewed to polar residues over residues 697–718 and 726–735; these read SSIN…SPAS and KTSVQGQVQK. S742 is modified (phosphoserine). Positions 755–779 are enriched in acidic residues; it reads EEEEQDDEEVLQGEQGDFNDDDTEP. Residues 798–813 show a composition bias toward basic and acidic residues; it reads EKHSSDSDYEQAKAKY. A phosphoserine mark is found at S817 and S818. T834 is modified (phosphothreonine). S928 is modified (phosphoserine). Residues 965–1035 are disordered; that stretch reads SQQQKVKQRS…RRDSQSSNEF (71 aa). A compositionally biased stretch (basic residues) spans 970 to 984; the sequence is VKQRSLQKLSSRQRR. Low complexity predominate over residues 1000 to 1011; sequence TPTSTKKTLKPT. Phosphoserine is present on residues S1029, S1031, S1032, S1039, S1041, S1076, S1107, and S1111. Over residues 1137–1146 the composition is skewed to polar residues; sequence TPHQSQQSQP. The tract at residues 1137 to 1161 is disordered; it reads TPHQSQQSQPVELDPFGAAPFPSKQ.

The protein belongs to the protein kinase superfamily. Ser/Thr protein kinase family. Autophosphorylated.

Its subcellular location is the nucleus. The enzyme catalyses L-seryl-[protein] + ATP = O-phospho-L-seryl-[protein] + ADP + H(+). It carries out the reaction L-threonyl-[protein] + ATP = O-phospho-L-threonyl-[protein] + ADP + H(+). May be involved in osteoblast differentiation. The sequence is that of BMP-2-inducible protein kinase (BMP2K) from Homo sapiens (Human).